Consider the following 508-residue polypeptide: Alpha-amylase (508 aa).

The N-terminal stretch at 1–19 is a signal peptide; it reads MLSLIIAACCVTVALAGTF. Cys46 and Cys102 are joined by a disulfide. The Ca(2+) site is built by Asn116, Arg173, and Asp182. Cys156 and Cys175 are disulfide-bonded. Residue Arg210 participates in chloride binding. Asp212 functions as the Nucleophile in the catalytic mechanism. His216 is a binding site for Ca(2+). Glu248 acts as the Proton donor in catalysis. Residues Asn311 and Arg349 each coordinate chloride. 2 disulfide bridges follow: Cys383-Cys389 and Cys455-Cys467.

It belongs to the glycosyl hydrolase 13 family. In terms of assembly, monomer. It depends on Ca(2+) as a cofactor. The cofactor is chloride.

The enzyme catalyses Endohydrolysis of (1-&gt;4)-alpha-D-glucosidic linkages in polysaccharides containing three or more (1-&gt;4)-alpha-linked D-glucose units.. This chain is Alpha-amylase, found in Pecten maximus (King scallop).